The following is a 542-amino-acid chain: GMP synthase [glutamine-hydrolyzing] (542 aa).

The region spanning 28–218 (IIVILDFGSQ…VYHICHCEPT (191 aa)) is the Glutamine amidotransferase type-1 domain. Cysteine 105 functions as the Nucleophile in the catalytic mechanism. Catalysis depends on residues histidine 192 and glutamate 194. One can recognise a GMPS ATP-PPase domain in the interval 219-417 (WTTAAFIEES…IGLPEEIVRR (199 aa)). 246–252 (SGGVDSS) contacts ATP.

Homodimer.

It catalyses the reaction XMP + L-glutamine + ATP + H2O = GMP + L-glutamate + AMP + diphosphate + 2 H(+). It participates in purine metabolism; GMP biosynthesis; GMP from XMP (L-Gln route): step 1/1. Functionally, catalyzes the synthesis of GMP from XMP. In Synechocystis sp. (strain ATCC 27184 / PCC 6803 / Kazusa), this protein is GMP synthase [glutamine-hydrolyzing] (guaA).